A 1594-amino-acid chain; its full sequence is Transcription factor Gibbin (1594 aa).

4 disordered regions span residues Pro-19–Asp-111, Leu-149–Ala-241, Gln-256–Gly-307, and Cys-367–Lys-464. Residues Gly-30–Pro-47 are compositionally biased toward pro residues. N6-acetyllysine is present on Lys-79. Residues Ser-165–Arg-177 are compositionally biased toward polar residues. The span at Ser-178 to Ser-193 shows a compositional bias: basic and acidic residues. Residues Pro-228–Asp-240 are compositionally biased toward acidic residues. Ser-267 is subject to Phosphoserine. Residues Pro-272–Ala-303 show a composition bias toward low complexity. Residues Ile-391–Gly-401 are compositionally biased toward basic residues. A DNA-binding region (a.T hook 1) is located at residues Arg-395–Gly-407. A compositionally biased stretch (pro residues) spans Glu-427–Glu-447. Residues Lys-541–Leu-553 constitute a DNA-binding region (a.T hook 2). Positions Met-578 to Asp-604 are disordered. A Phosphoserine modification is found at Ser-593. A Glycyl lysine isopeptide (Lys-Gly) (interchain with G-Cter in SUMO2) cross-link involves residue Lys-606. Positions Leu-714–Gly-789 are disordered. Over residues Lys-734–Lys-743 the composition is skewed to basic residues. 2 positions are modified to phosphoserine: Ser-825 and Ser-842. At Arg-887 the chain carries Omega-N-methylarginine. At Ser-892 the chain carries Phosphoserine. Positions Lys-942–Tyr-967 are disordered. Ser-1060 is modified (phosphoserine). Disordered regions lie at residues Val-1152–Leu-1191 and Ser-1245–Gly-1306. 3 stretches are compositionally biased toward low complexity: residues Ser-1153–Gln-1168, Ser-1180–Leu-1191, and Ser-1245–Pro-1264. Ser-1180 carries the post-translational modification Phosphoserine. Phosphoserine occurs at positions 1315, 1317, and 1392. Thr-1394 carries the phosphothreonine modification. Ser-1396 carries the phosphoserine modification. Lys-1402 is covalently cross-linked (Glycyl lysine isopeptide (Lys-Gly) (interchain with G-Cter in SUMO2)). Residues His-1495 to Ala-1525 form a disordered region. Ser-1498 and Ser-1540 each carry phosphoserine.

The protein resides in the nucleus. It is found in the chromosome. In terms of biological role, transcription factor required for the proper patterning of the epidermis, which plays a key role in early epithelial morphogenesis. Directly binds promoter and enhancer regions and acts by maintaining local enhancer-promoter chromatin architecture. Interacts with many sequence-specific zinc-finger transcription factors and methyl-CpG-binding proteins to regulate the expression of mesoderm genes that wire surface ectoderm stratification. This Mus musculus (Mouse) protein is Transcription factor Gibbin.